A 342-amino-acid polypeptide reads, in one-letter code: N-acetyl-gamma-glutamyl-phosphate reductase (342 aa).

Residue Cys147 is part of the active site.

This sequence belongs to the NAGSA dehydrogenase family. Type 1 subfamily.

It is found in the cytoplasm. It carries out the reaction N-acetyl-L-glutamate 5-semialdehyde + phosphate + NADP(+) = N-acetyl-L-glutamyl 5-phosphate + NADPH + H(+). It functions in the pathway amino-acid biosynthesis; L-arginine biosynthesis; N(2)-acetyl-L-ornithine from L-glutamate: step 3/4. In terms of biological role, catalyzes the NADPH-dependent reduction of N-acetyl-5-glutamyl phosphate to yield N-acetyl-L-glutamate 5-semialdehyde. The chain is N-acetyl-gamma-glutamyl-phosphate reductase from Methanosphaera stadtmanae (strain ATCC 43021 / DSM 3091 / JCM 11832 / MCB-3).